We begin with the raw amino-acid sequence, 1494 residues long: Ral GTPase-activating protein subunit beta (1494 aa).

2 disordered regions span residues 355–437 and 709–738; these read PRSD…APRR and ENNL…PDSE. Residue Ser359 is modified to Phosphoserine. Phosphothreonine occurs at positions 363 and 379. 3 stretches are compositionally biased toward polar residues: residues 369–381, 392–428, and 711–735; these read SMPQ…TTPP, NKAT…TSSE, and NLKS…PTTP. A phosphoserine mark is found at Ser421 and Ser720. Thr734 bears the Phosphothreonine mark. In terms of domain architecture, Rap-GAP spans 1149–1392; that stretch reads IGYLDLLPCR…TTLEKEVPVI (244 aa). Ser1285 is subject to Phosphoserine. Positions 1312–1323 are enriched in polar residues; it reads NLNSSQRLSPSS. The tract at residues 1312–1335 is disordered; that stretch reads NLNSSQRLSPSSRMRKLPQGRPVP.

In terms of assembly, component of the heterodimeric RalGAP1 complex with RALGAPA1 and of the heterodimeric RalGAP2 complex with RALGAPA2. Heterodimerization is required for activity. In terms of tissue distribution, highly expressed in brain, mostly in amygdala.

Functionally, non-catalytic subunit of the heterodimeric RalGAP1 and RalGAP2 complexes which act as GTPase activators for the Ras-like small GTPases RALA and RALB. The sequence is that of Ral GTPase-activating protein subunit beta (RALGAPB) from Homo sapiens (Human).